Reading from the N-terminus, the 379-residue chain is Lipid-A-disaccharide synthase (379 aa).

The protein belongs to the LpxB family.

The enzyme catalyses a lipid X + a UDP-2-N,3-O-bis[(3R)-3-hydroxyacyl]-alpha-D-glucosamine = a lipid A disaccharide + UDP + H(+). It functions in the pathway bacterial outer membrane biogenesis; LPS lipid A biosynthesis. Condensation of UDP-2,3-diacylglucosamine and 2,3-diacylglucosamine-1-phosphate to form lipid A disaccharide, a precursor of lipid A, a phosphorylated glycolipid that anchors the lipopolysaccharide to the outer membrane of the cell. This Vibrio campbellii (strain ATCC BAA-1116) protein is Lipid-A-disaccharide synthase.